Reading from the N-terminus, the 327-residue chain is Spermidine/putrescine import ATP-binding protein PotA (327 aa).

Positions 5–235 (IKVEAVEKHF…PKTLFVATFI (231 aa)) constitute an ABC transporter domain. 37-44 (GPSGCGKT) is a binding site for ATP.

Belongs to the ABC transporter superfamily. Spermidine/putrescine importer (TC 3.A.1.11.1) family. In terms of assembly, the complex is composed of two ATP-binding proteins (PotA), two transmembrane proteins (PotB and PotC) and a solute-binding protein (PotD).

It is found in the cell membrane. It catalyses the reaction ATP + H2O + polyamine-[polyamine-binding protein]Side 1 = ADP + phosphate + polyamineSide 2 + [polyamine-binding protein]Side 1.. Functionally, part of the ABC transporter complex PotABCD involved in spermidine/putrescine import. Responsible for energy coupling to the transport system. This Bacillus anthracis protein is Spermidine/putrescine import ATP-binding protein PotA.